Reading from the N-terminus, the 156-residue chain is Aspartate carbamoyltransferase regulatory chain (156 aa).

Zn(2+)-binding residues include C109, C114, C138, and C141.

This sequence belongs to the PyrI family. In terms of assembly, contains catalytic and regulatory chains. Requires Zn(2+) as cofactor.

Functionally, involved in allosteric regulation of aspartate carbamoyltransferase. The protein is Aspartate carbamoyltransferase regulatory chain of Baumannia cicadellinicola subsp. Homalodisca coagulata.